The primary structure comprises 350 residues: Probable flap endonuclease 1 homolog (350 aa).

The N-domain stretch occupies residues 1–95 (MGITKLAHLI…AVLEKRAQST (95 aa)). Residue Asp-34 coordinates Mg(2+). Arg-61 is a DNA binding site. Positions 77, 130, 132, 151, and 153 each coordinate Mg(2+). The tract at residues 110–223 (NQECLRLLHL…SRALKLIKEH (114 aa)) is I-domain. Glu-130 provides a ligand contact to DNA. DNA contacts are provided by Gly-201 and Asp-203. Asp-203 serves as a coordination point for Mg(2+). The interval 317 to 325 (RQSRLEDFF) is interaction with PCNA.

This sequence belongs to the XPG/RAD2 endonuclease family. FEN1 subfamily. Interacts with PCNA. Three molecules of fen1 bind to one PCNA trimer with each molecule binding to one PCNA monomer. PCNA stimulates the nuclease activity without altering cleavage specificity. Requires Mg(2+) as cofactor. In terms of processing, phosphorylated. Phosphorylation upon DNA damage induces relocalization to the nuclear plasma.

It is found in the nucleus. The protein resides in the nucleolus. The protein localises to the nucleoplasm. It localises to the mitochondrion. In terms of biological role, structure-specific nuclease with 5'-flap endonuclease and 5'-3' exonuclease activities involved in DNA replication and repair. During DNA replication, cleaves the 5'-overhanging flap structure that is generated by displacement synthesis when DNA polymerase encounters the 5'-end of a downstream Okazaki fragment. It enters the flap from the 5'-end and then tracks to cleave the flap base, leaving a nick for ligation. Also involved in the long patch base excision repair (LP-BER) pathway, by cleaving within the apurinic/apyrimidinic (AP) site-terminated flap. Acts as a genome stabilization factor that prevents flaps from equilibrating into structures that lead to duplications and deletions. Also possesses 5'-3' exonuclease activity on nicked or gapped double-stranded DNA, and exhibits RNase H activity. Also involved in replication and repair of rDNA and in repairing mitochondrial DNA. This Danio rerio (Zebrafish) protein is Probable flap endonuclease 1 homolog.